Consider the following 121-residue polypeptide: Probable tail terminator protein (121 aa).

Belongs to the Skunalikevirus tail terminator protein family. In terms of assembly, homohexamer. Interacts with the tail tube protein.

It is found in the virion. In terms of biological role, plays an essential role in tail assembly by capping the rapidly polymerizing tail once it has reached its requisite length and serving as the interaction surface for the connector and the tail tube proteins. This chain is Probable tail terminator protein, found in Lactococcus phage SK1 (Lactococcus lactis bacteriophage SK1).